A 96-amino-acid chain; its full sequence is Large ribosomal subunit protein bL21 (96 aa).

Belongs to the bacterial ribosomal protein bL21 family. Part of the 50S ribosomal subunit. Contacts protein L20.

This protein binds to 23S rRNA in the presence of protein L20. This is Large ribosomal subunit protein bL21 from Chlorobium phaeobacteroides (strain BS1).